The chain runs to 608 residues: Putative multicopper oxidase GMC1 (608 aa).

Plastocyanin-like domains follow at residues 51–163, 243–374, and 421–548; these read INGY…LIVE, LING…ELYR, and ERTF…FEVP. Cu cation-binding residues include H100, H102, H145, and H147. H452, H455, H457, H530, C531, H532, and H536 together coordinate Cu cation.

Belongs to the multicopper oxidase family. The cofactor is Cu cation.

Could be an iron transport multicopper oxidase, which is required for Fe(2+) high affinity uptake. May be required to oxidize Fe(2+) and release it from the transporter. Essential component of copper-dependent iron transport. Involved in meiotic prophase and synaptonemal complex (SC) assembly. This chain is Putative multicopper oxidase GMC1 (GMC1), found in Saccharomyces cerevisiae (strain ATCC 204508 / S288c) (Baker's yeast).